Consider the following 434-residue polypeptide: Cobyrinate a,c-diamide synthase (434 aa).

A GATase cobBQ-type domain is found at 239–430; the sequence is KMAIAYDPAF…SHLHFSNFQL (192 aa). Cys320 serves as the catalytic Nucleophile.

The protein belongs to the CobB/CbiA family. It depends on Mg(2+) as a cofactor.

The catalysed reaction is cob(II)yrinate + 2 L-glutamine + 2 ATP + 2 H2O = cob(II)yrinate a,c diamide + 2 L-glutamate + 2 ADP + 2 phosphate + 2 H(+). Its pathway is cofactor biosynthesis; adenosylcobalamin biosynthesis; cob(II)yrinate a,c-diamide from sirohydrochlorin (anaerobic route): step 10/10. Its function is as follows. Catalyzes the ATP-dependent amidation of the two carboxylate groups at positions a and c of cobyrinate, using either L-glutamine or ammonia as the nitrogen source. This Saccharolobus solfataricus (strain ATCC 35092 / DSM 1617 / JCM 11322 / P2) (Sulfolobus solfataricus) protein is Cobyrinate a,c-diamide synthase.